The primary structure comprises 792 residues: Endonuclease MutS2 (792 aa).

334–341 (GPNTGGKT) serves as a coordination point for ATP. Residues 717-792 (IDLRGMMLSE…ENGVTVVELK (76 aa)) form the Smr domain.

It belongs to the DNA mismatch repair MutS family. MutS2 subfamily. In terms of assembly, homodimer. Binds to stalled ribosomes, contacting rRNA.

Functionally, endonuclease that is involved in the suppression of homologous recombination and thus may have a key role in the control of bacterial genetic diversity. Its function is as follows. Acts as a ribosome collision sensor, splitting the ribosome into its 2 subunits. Detects stalled/collided 70S ribosomes which it binds and splits by an ATP-hydrolysis driven conformational change. Acts upstream of the ribosome quality control system (RQC), a ribosome-associated complex that mediates the extraction of incompletely synthesized nascent chains from stalled ribosomes and their subsequent degradation. Probably generates substrates for RQC. The chain is Endonuclease MutS2 from Ruminiclostridium cellulolyticum (strain ATCC 35319 / DSM 5812 / JCM 6584 / H10) (Clostridium cellulolyticum).